The sequence spans 159 residues: Small ribosomal subunit protein uS9 (159 aa).

It belongs to the universal ribosomal protein uS9 family.

This Rickettsia massiliae (strain Mtu5) protein is Small ribosomal subunit protein uS9.